We begin with the raw amino-acid sequence, 676 residues long: SPARC-like protein 1 (676 aa).

A signal peptide spans 1 to 16; that stretch reads MKTVLLLICLLGSAFT. A compositionally biased stretch (basic and acidic residues) spans 35-44; sequence EKHKYTHSEM. 3 disordered regions span residues 35-151, 173-369, and 385-437; these read EKHK…WALR, NTVG…GVYR, and SEDN…RNST. Residues 95 to 108 are compositionally biased toward polar residues; that stretch reads KNSLRSINFLTLHS. Residue Asn-182 is glycosylated (N-linked (GlcNAc...) asparagine). Positions 184-202 are enriched in acidic residues; that stretch reads SEEEEAGEEEDEEWGEETD. 2 stretches are compositionally biased toward basic and acidic residues: residues 249–266 and 273–291; these read EKFS…KEGK and NHNE…KEHF. Positions 312 to 328 are enriched in acidic residues; that stretch reads NAEEDDNDSGDDGEEDL. Asn-318 is a glycosylation site (N-linked (GlcNAc...) asparagine). Over residues 385 to 394 the composition is skewed to basic and acidic residues; sequence SEDNHYHHEP. N-linked (GlcNAc...) asparagine glycosylation occurs at Asn-396. Low complexity predominate over residues 397–408; that stretch reads SSSKQQLQTSSS. N-linked (GlcNAc...) asparagine glycosylation is present at Asn-413. The span at 415-433 shows a compositional bias: basic and acidic residues; the sequence is TEHEDEVKTTGGSYHEESA. A glycan (N-linked (GlcNAc...) asparagine) is linked at Asn-435. In terms of domain architecture, Follistatin-like spans 444-466; sequence LCRNFHCKRGKVCQADKQGKPSC. 7 disulfides stabilise this stretch: Cys-445/Cys-456, Cys-450/Cys-466, Cys-468/Cys-502, Cys-474/Cys-495, Cys-484/Cys-521, Cys-527/Cys-638, and Cys-646/Cys-662. In terms of domain architecture, Kazal-like spans 462–523; the sequence is GKPSCICQDP…HLDYMGACKH (62 aa). Asn-488 carries an N-linked (GlcNAc...) asparagine glycan. The EF-hand domain maps to 634-669; sequence PMEHCITRFFQECDGDQDKLITLKEWCHCFAIKEED. Positions 647, 649, 651, and 658 each coordinate Ca(2+).

It belongs to the SPARC family. In terms of tissue distribution, glial (Mueller) cells of the neuroretina.

Its subcellular location is the secreted. It localises to the extracellular space. It is found in the extracellular matrix. Its function is as follows. Could play a role in the late stage of neuroretina morphogenesis. In Coturnix japonica (Japanese quail), this protein is SPARC-like protein 1 (SPARCL1).